Reading from the N-terminus, the 283-residue chain is Cilia- and flagella-associated protein 77 (283 aa).

Residues 151–170 are disordered; sequence DQEDRRQKEPPPIPPNMTFG.

Belongs to the CFAP77 family. As to quaternary structure, microtubule inner protein component of sperm flagellar doublet microtubules.

It is found in the cytoplasm. The protein localises to the cytoskeleton. Its subcellular location is the cilium axoneme. The protein resides in the flagellum axoneme. Microtubule inner protein (MIP) part of the dynein-decorated doublet microtubules (DMTs) in cilia axoneme, which is required for motile cilia beating. The chain is Cilia- and flagella-associated protein 77 from Mus musculus (Mouse).